Reading from the N-terminus, the 1196-residue chain is Cingulin (1196 aa).

The interval 7–354 is head; it reads MAEPRGPVDH…LVMTSGSAKG (348 aa). Residues 48-62 carry the ZIM motif; it reads ANTYGVAVRVQGIAG. The interaction with TJP1/ZO1 stretch occupies residues 54–67; it reads AVRVQGIAGQPFVV. Residues 82–105 form a disordered region; that stretch reads IKGTNNRGPPGALSSDSELPESTY. A phosphoserine mark is found at serine 95, serine 96, serine 98, serine 135, serine 137, serine 140, serine 155, serine 165, and serine 214. Polar residues predominate over residues 95–105; sequence SSDSELPESTY. Residues 183-263 are disordered; it reads NKFDSRQGGQ…NQGPLGGFSC (81 aa). Residues 218 to 231 are compositionally biased toward basic and acidic residues; that stretch reads RLPRDTLDEREHQF. Residues 245 to 256 show a composition bias toward polar residues; that stretch reads MGNSKQSSQNQG. At serine 274 the chain carries Phosphoserine. The stretch at 355-1150 forms a coiled coil; sequence LTGQSELSQK…ARIKTLEKDS (796 aa). The residue at position 576 (lysine 576) is an N6-acetyllysine. Residues 884–897 are compositionally biased toward basic and acidic residues; the sequence is AQRQAKEWATEAEK. Disordered regions lie at residues 884 to 906, 1023 to 1061, and 1149 to 1174; these read AQRQ…SRLQ, DLKS…EERE, and DSWR…EEFD. Low complexity predominate over residues 1038 to 1050; the sequence is SASLSQLESQNQE. The segment covering 1051-1061 has biased composition (basic and acidic residues); sequence LQERLQAEERE. Residues 1155 to 1196 are tail; the sequence is SRSAAESAQREGLSSDEEFDSVYDPSSIASLLTESNLQTSSC. Serine 1168, serine 1169, and serine 1175 each carry phosphoserine.

This sequence belongs to the cingulin family. As to quaternary structure, homodimer. Interacts with TJP1/ZO1 and SPEF1.

The protein resides in the cell junction. Its subcellular location is the tight junction. In terms of biological role, probably plays a role in the formation and regulation of the tight junction (TJ) paracellular permeability barrier. The sequence is that of Cingulin from Canis lupus familiaris (Dog).